The following is a 432-amino-acid chain: Putative D-alanyl-D-alanine carboxypeptidase (432 aa).

Residues 7–25 (ATVLLTFSLSAFAVEYPVL) traverse the membrane as a helical; Signal-anchor segment.

It belongs to the peptidase S12 family. YfeW subfamily.

It localises to the cell inner membrane. The enzyme catalyses Preferential cleavage: (Ac)2-L-Lys-D-Ala-|-D-Ala. Also transpeptidation of peptidyl-alanyl moieties that are N-acyl substituents of D-alanine.. The sequence is that of Putative D-alanyl-D-alanine carboxypeptidase from Salmonella agona (strain SL483).